We begin with the raw amino-acid sequence, 387 residues long: Putative transposase y4pF/y4sB (387 aa).

This sequence belongs to the transposase 20 family.

This is Putative transposase y4pF/y4sB from Sinorhizobium fredii (strain NBRC 101917 / NGR234).